The following is a 256-amino-acid chain: MSSSERVAKVVLVDIEGTTTSISFVHDVLFPYAKQNVEKFLRDSWEEDDIKRIVQDLQQVPQYADYKALLSGPPTEVDVDLIAGFVRYLIDQDLKVTPMKTLQGLIWAQGYANGELKGHVYEDVPAAFEAWRAAGLQIAVYSSGSVAAQKLIFGHSLAGNLQPYLSAYFDTHVGHKQEQQSYKNIAKQLKEDPKQILFLTDIPGEAAAARCAGLQAIILKRPGNAALADDQKTGFELIPDFKPLHNLKVPVNKSQA.

Residues Asp-14 and Glu-16 each coordinate Mg(2+). Residues 142 to 143 and Lys-176 each bind substrate; that span reads SS. Residue Asp-201 participates in Mg(2+) binding.

It belongs to the HAD-like hydrolase superfamily. MasA/MtnC family. In terms of assembly, monomer. It depends on Mg(2+) as a cofactor.

The protein resides in the cytoplasm. It localises to the nucleus. It catalyses the reaction 5-methylsulfanyl-2,3-dioxopentyl phosphate + H2O = 1,2-dihydroxy-5-(methylsulfanyl)pent-1-en-3-one + phosphate. It functions in the pathway amino-acid biosynthesis; L-methionine biosynthesis via salvage pathway; L-methionine from S-methyl-5-thio-alpha-D-ribose 1-phosphate: step 3/6. Its pathway is amino-acid biosynthesis; L-methionine biosynthesis via salvage pathway; L-methionine from S-methyl-5-thio-alpha-D-ribose 1-phosphate: step 4/6. In terms of biological role, bifunctional enzyme that catalyzes the enolization of 2,3-diketo-5-methylthiopentyl-1-phosphate (DK-MTP-1-P) into the intermediate 2-hydroxy-3-keto-5-methylthiopentenyl-1-phosphate (HK-MTPenyl-1-P), which is then dephosphorylated to form the acireductone 1,2-dihydroxy-3-keto-5-methylthiopentene (DHK-MTPene). In Drosophila melanogaster (Fruit fly), this protein is Enolase-phosphatase E1.